Reading from the N-terminus, the 65-residue chain is Large ribosomal subunit protein bL33c (65 aa).

It belongs to the bacterial ribosomal protein bL33 family.

The protein resides in the plastid. It localises to the chloroplast. This is Large ribosomal subunit protein bL33c from Zygnema circumcarinatum (Green alga).